A 464-amino-acid chain; its full sequence is ATP synthase subunit beta (464 aa).

153–160 is an ATP binding site; it reads GGAGVGKT.

It belongs to the ATPase alpha/beta chains family. In terms of assembly, F-type ATPases have 2 components, CF(1) - the catalytic core - and CF(0) - the membrane proton channel. CF(1) has five subunits: alpha(3), beta(3), gamma(1), delta(1), epsilon(1). CF(0) has three main subunits: a(1), b(2) and c(9-12). The alpha and beta chains form an alternating ring which encloses part of the gamma chain. CF(1) is attached to CF(0) by a central stalk formed by the gamma and epsilon chains, while a peripheral stalk is formed by the delta and b chains.

The protein resides in the cell inner membrane. The enzyme catalyses ATP + H2O + 4 H(+)(in) = ADP + phosphate + 5 H(+)(out). Produces ATP from ADP in the presence of a proton gradient across the membrane. The catalytic sites are hosted primarily by the beta subunits. This Burkholderia ambifaria (strain MC40-6) protein is ATP synthase subunit beta.